The primary structure comprises 99 residues: MDDVVRQIVIRGRVQGVGFRYWTMREAIRLGVAGWVRNRRDGSVEALFAGPADAVADMVARCRNGPGAARVDAVEDQPVAANAEKMIRPGERFSQLPTV.

The Acylphosphatase-like domain maps to 5–97 (VRQIVIRGRV…RPGERFSQLP (93 aa)). Catalysis depends on residues arginine 20 and asparagine 38.

The protein belongs to the acylphosphatase family.

The catalysed reaction is an acyl phosphate + H2O = a carboxylate + phosphate + H(+). In Nitrobacter hamburgensis (strain DSM 10229 / NCIMB 13809 / X14), this protein is Acylphosphatase (acyP).